The primary structure comprises 455 residues: tRNA modification GTPase MnmE (455 aa).

(6S)-5-formyl-5,6,7,8-tetrahydrofolate-binding residues include R23, E85, and R124. The 156-residue stretch at 220–375 folds into the TrmE-type G domain; that stretch reads GVSVVIAGKP…LQDAIFEAFI (156 aa). N230 lines the K(+) pocket. Residues 230–235, 249–255, and 274–277 contribute to the GTP site; these read NVGKSS, TSVPGTT, and DTAG. Mg(2+) is bound at residue S234. Residues T249, V251, and T254 each contribute to the K(+) site. A Mg(2+)-binding site is contributed by T255. (6S)-5-formyl-5,6,7,8-tetrahydrofolate is bound at residue K455.

It belongs to the TRAFAC class TrmE-Era-EngA-EngB-Septin-like GTPase superfamily. TrmE GTPase family. In terms of assembly, homodimer. Heterotetramer of two MnmE and two MnmG subunits. K(+) serves as cofactor.

The protein resides in the cytoplasm. Exhibits a very high intrinsic GTPase hydrolysis rate. Involved in the addition of a carboxymethylaminomethyl (cmnm) group at the wobble position (U34) of certain tRNAs, forming tRNA-cmnm(5)s(2)U34. The sequence is that of tRNA modification GTPase MnmE from Geotalea uraniireducens (strain Rf4) (Geobacter uraniireducens).